Reading from the N-terminus, the 710-residue chain is Pentatricopeptide repeat-containing protein At3g14330 (710 aa).

PPR repeat units follow at residues 166–196 (NPKL…VTDS), 200–234 (TEKV…FIEP), 235–269 (GNFS…KEKV), 270–304 (DQVV…NVVT), 305–331 (WNSL…MQEE), 336–370 (SWAT…KEKP), 371–401 (DVPL…MLTK), 402–436 (DLAS…GVAP), 437–467 (DGIT…MKTE), and 473–503 (ALEH…MPFK). The interval 508–583 (IWGSLLNSCR…EAGCSWVQVK (76 aa)) is type E motif. A type E(+) motif region spans residues 584–615 (DKIQIFVAGGGYEFRNSDEYKKVWTELQEAIE). Positions 616–710 (KSGYSPNTSV…DGICSCKDYW (95 aa)) are type DYW motif.

This sequence belongs to the PPR family. PCMP-H subfamily.

The protein is Pentatricopeptide repeat-containing protein At3g14330 (PCMP-H57) of Arabidopsis thaliana (Mouse-ear cress).